A 581-amino-acid chain; its full sequence is Potassium-transporting ATPase potassium-binding subunit (581 aa).

The next 12 helical transmembrane spans lie at 2–22 (LQGWIQIALTILIIVAITPFF), 74–94 (AVIAILVFSLIAGQGVLPLNP), 135–155 (GLGYQMFTSAGTGLAVGIAFI), 177–197 (ILLPISIVGAIALIIAGVPET), 255–275 (LVQLVAILSIPTSLIYTYGVF), 284–304 (LIYLIPLGIFIGFTIITAIGE), 332–352 (WAQSALYAVTTTATMCGAVIA), 357–377 (LMPNGGFATLSNLFLQIVFGG), 381–401 (GTAYLFAYLILAVFVTGLMVG), 421–441 (FLILLVHPIAILIPGAIALAF), 501–521 (LSACFSLLAGRYIPIAALLLL), and 550–570 (AGVILILGALTFLPILALGPI).

This sequence belongs to the KdpA family. In terms of assembly, the system is composed of three essential subunits: KdpA, KdpB and KdpC.

It localises to the cell inner membrane. Its function is as follows. Part of the high-affinity ATP-driven potassium transport (or Kdp) system, which catalyzes the hydrolysis of ATP coupled with the electrogenic transport of potassium into the cytoplasm. This subunit binds the periplasmic potassium ions and delivers the ions to the membrane domain of KdpB through an intramembrane tunnel. In Microcystis aeruginosa (strain NIES-843 / IAM M-2473), this protein is Potassium-transporting ATPase potassium-binding subunit.